A 162-amino-acid chain; its full sequence is Ribosome maturation factor RimM (162 aa).

A PRC barrel domain is found at Asp-91–Met-162.

Belongs to the RimM family. As to quaternary structure, binds ribosomal protein uS19.

The protein localises to the cytoplasm. Functionally, an accessory protein needed during the final step in the assembly of 30S ribosomal subunit, possibly for assembly of the head region. Essential for efficient processing of 16S rRNA. May be needed both before and after RbfA during the maturation of 16S rRNA. It has affinity for free ribosomal 30S subunits but not for 70S ribosomes. The sequence is that of Ribosome maturation factor RimM from Finegoldia magna (strain ATCC 29328 / DSM 20472 / WAL 2508) (Peptostreptococcus magnus).